We begin with the raw amino-acid sequence, 202 residues long: LexA repressor (202 aa).

The H-T-H motif DNA-binding region spans 32 to 52 (RAEVCSAFGFKSPNAAETHLR). Residues Ser121 and Lys158 each act as for autocatalytic cleavage activity in the active site.

The protein belongs to the peptidase S24 family. Homodimer.

It catalyses the reaction Hydrolysis of Ala-|-Gly bond in repressor LexA.. Its function is as follows. Represses a number of genes involved in the response to DNA damage (SOS response), including recA and lexA. In the presence of single-stranded DNA, RecA interacts with LexA causing an autocatalytic cleavage which disrupts the DNA-binding part of LexA, leading to derepression of the SOS regulon and eventually DNA repair. The sequence is that of LexA repressor from Azoarcus sp. (strain BH72).